Here is a 203-residue protein sequence, read N- to C-terminus: Urease accessory protein UreG (203 aa).

Position 14–21 (14–21 (GPVGSGKT)) interacts with GTP.

This sequence belongs to the SIMIBI class G3E GTPase family. UreG subfamily. In terms of assembly, homodimer. UreD, UreF and UreG form a complex that acts as a GTP-hydrolysis-dependent molecular chaperone, activating the urease apoprotein by helping to assemble the nickel containing metallocenter of UreC. The UreE protein probably delivers the nickel.

The protein localises to the cytoplasm. Facilitates the functional incorporation of the urease nickel metallocenter. This process requires GTP hydrolysis, probably effectuated by UreG. In Rhizobium leguminosarum bv. trifolii (strain WSM2304), this protein is Urease accessory protein UreG.